The sequence spans 672 residues: Flap endonuclease 1 (672 aa).

The interval 1 to 106 (MGIKGLTKFI…SELEKRGEKR (106 aa)) is N-domain. Residue aspartate 34 coordinates Mg(2+). DNA contacts are provided by arginine 47 and arginine 72. Mg(2+) is bound by residues aspartate 88, glutamate 160, glutamate 162, aspartate 181, and aspartate 183. Residues 124–266 (EIKKQSGRTV…KTAYNLIKEY (143 aa)) are I-domain. Glutamate 160 contributes to the DNA binding site. Residues glycine 244 and aspartate 246 each coordinate DNA. Aspartate 246 is a binding site for Mg(2+). The interaction with PCNA stretch occupies residues 349–357 (TQRRLDNFF). A disordered region spans residues 371–610 (ETKKEQTLPA…EDSPNSYNNI (240 aa)). Basic and acidic residues-rich tracts occupy residues 413-493 (MKEE…KKSL), 502-526 (DSDKESESGNIIKNEKQNMDDEKIN), and 535-548 (DHSRIRHTENKDNI). Over residues 549-584 (SDINNNNNNNNSSSNNNNISNNHFNSVSSNSTFNSS) the composition is skewed to low complexity. Residues 587 to 603 (LKSEDTLKSNSPLKEDS) show a composition bias toward basic and acidic residues.

This sequence belongs to the XPG/RAD2 endonuclease family. FEN1 subfamily. Interacts with PCNA1 and PCNA2. Three molecules of FEN1 bind to one PCNA trimer with each molecule binding to one PCNA monomer. PCNA stimulates the nuclease activity without altering cleavage specificity. The cofactor is Mg(2+). Phosphorylated. Phosphorylation upon DNA damage induces relocalization to the nuclear plasma.

Its subcellular location is the nucleus. The protein localises to the nucleolus. The protein resides in the nucleoplasm. It is found in the mitochondrion. Structure-specific nuclease with 5'-flap endonuclease and 5'-3' exonuclease activities involved in DNA replication and repair. During DNA replication, cleaves the 5'-overhanging flap structure that is generated by displacement synthesis when DNA polymerase encounters the 5'-end of a downstream Okazaki fragment. It enters the flap from the 5'-end and then tracks to cleave the flap base, leaving a nick for ligation. Also involved in the long patch base excision repair (LP-BER) pathway, by cleaving within the apurinic/apyrimidinic (AP) site-terminated flap. Acts as a genome stabilization factor that prevents flaps from equilibrating into structures that lead to duplications and deletions. Also possesses 5'-3' exonuclease activity on nicked or gapped double-stranded DNA, and exhibits RNase H activity. Also involved in replication and repair of rDNA and in repairing mitochondrial DNA. This Plasmodium falciparum (isolate 3D7) protein is Flap endonuclease 1.